The primary structure comprises 209 residues: Small ribosomal subunit protein uS3 (209 aa).

Residues I17–K86 enclose the KH type-2 domain.

This sequence belongs to the universal ribosomal protein uS3 family. In terms of assembly, part of the 30S ribosomal subunit.

In terms of biological role, binds the lower part of the 30S subunit head. This Thermococcus gammatolerans (strain DSM 15229 / JCM 11827 / EJ3) protein is Small ribosomal subunit protein uS3.